The following is an 885-amino-acid chain: Cytosolic carboxypeptidase-like protein 5 (885 aa).

The Peptidase M14 domain occupies 157–570 (YPFSYSDCQD…AMAIAALDMA (414 aa)). The Zn(2+) site is built by H252 and E255. The disordered stretch occupies residues 343 to 402 (NSQSPSEHQHSSHLPPDAPLSDPEKADSLQNRAHLGRSSSGDKPEAWTQTEVAEQKPNSV). Residues 388–402 (AWTQTEVAEQKPNSV) are compositionally biased toward polar residues. Position 434 (H434) interacts with Zn(2+). E516 acts as the Proton donor/acceptor in catalysis. Disordered stretches follow at residues 605–733 (TTVN…LASS) and 783–839 (RLQA…PRPC). The span at 620-640 (PPRSNNGLPVSCSENTLSRAR) shows a compositional bias: polar residues. Low complexity-rich tracts occupy residues 641 to 666 (SFSTGTSAGGSSSSQQNSPQMKNSPS) and 714 to 733 (PTSSSLAPSPTPASSNLASS). S840 is modified (phosphoserine).

The protein belongs to the peptidase M14 family. Zn(2+) serves as cofactor.

Its subcellular location is the cytoplasm. The protein localises to the cytosol. The protein resides in the nucleus. It is found in the cytoskeleton. It localises to the spindle. Its subcellular location is the midbody. It catalyses the reaction gamma-L-glutamyl-L-glutamyl-[protein] + H2O = L-glutamyl-[protein] + L-glutamate. It carries out the reaction (L-glutamyl)(n+1)-gamma-L-glutamyl-L-glutamyl-[protein] + H2O = (L-glutamyl)(n)-gamma-L-glutamyl-L-glutamyl-[protein] + L-glutamate. The enzyme catalyses C-terminal L-alpha-aminoacyl-L-glutamyl-[tubulin] + H2O = C-terminal L-alpha-aminoacyl-[tubulin] + L-glutamate. The catalysed reaction is C-terminal L-alpha-aminoacyl-L-glutamyl-L-glutamyl-[tubulin] + H2O = C-terminal L-alpha-aminoacyl-L-glutamyl-[tubulin] + L-glutamate. Its function is as follows. Metallocarboxypeptidase that mediates deglutamylation of tubulin and non-tubulin target proteins. Catalyzes the removal of polyglutamate side chains present on the gamma-carboxyl group of glutamate residues within the C-terminal tail of alpha- and beta-tubulin. Cleaves alpha- and gamma-linked polyglutamate tubulin side-chain, as well as the branching point glutamate. Also catalyzes the removal of alpha-linked glutamate residues from the carboxy-terminus of alpha-tubulin. Mediates deglutamylation of nucleotidyltransferase CGAS, leading to CGAS antiviral defense response activation. This chain is Cytosolic carboxypeptidase-like protein 5 (AGBL5), found in Bos taurus (Bovine).